The sequence spans 306 residues: Proline-rich transmembrane protein 1 (306 aa).

Residues 1–142 (MSSEKSGLPD…PPPAPAQTAQ (142 aa)) form a disordered region. The Cytoplasmic portion of the chain corresponds to 1–223 (MSSEKSGLPD…LEPRRPPHDY (223 aa)). Over residues 15–36 (TSPPPYNAPQPPAEPPAPPPQA) the composition is skewed to pro residues. The span at 40–49 (SHHHHHHHYH) shows a compositional bias: basic residues. Pro residues-rich tracts occupy residues 87–111 (HAPP…PPDP) and 121–137 (PLPP…PPAP). Residues 224–244 (MPIAVLTTICCFWPTGIIAIF) form a helical membrane-spanning segment. The Extracellular segment spans residues 245–275 (KAVQVRTALARGDMVSAEIASREARNFSFIS). The helical intramembrane region spans 276–296 (LAVGIAAMVLCTILTVVIIIA). The Extracellular portion of the chain corresponds to 297-306 (AQHHENYWDP).

The protein belongs to the CD225/Dispanin family. As to quaternary structure, component of the outer core of AMPAR complex. AMPAR complex consists of an inner core made of 4 pore-forming GluA/GRIA proteins (GRIA1, GRIA2, GRIA3 and GRIA4) and 4 major auxiliary subunits arranged in a twofold symmetry. One of the two pairs of distinct binding sites is occupied either by CNIH2, CNIH3 or CACNG2, CACNG3. The other harbors CACNG2, CACNG3, CACNG4, CACNG8 or GSG1L. This inner core of AMPAR complex is complemented by outer core constituents binding directly to the GluA/GRIA proteins at sites distinct from the interaction sites of the inner core constituents. Outer core constituents include at least PRRT1, PRRT2, CKAMP44/SHISA9, FRRS1L and NRN1. The proteins of the inner and outer core serve as a platform for other, more peripherally associated AMPAR constituents. Alone or in combination, these auxiliary subunits control the gating and pharmacology of the AMPAR complex and profoundly impact their biogenesis and protein processing.

Its subcellular location is the cell membrane. The protein localises to the synapse. In terms of biological role, required to maintain a pool of extrasynaptic AMPA-regulated glutamate receptors (AMPAR) which is necessary for synapse development and function. Regulates basal AMPAR function and synaptic transmission during development but is dispensable at mature hippocampal synapses. Plays a role in regulating basal phosphorylation levels of glutamate receptor GRIA1 and promotes GRIA1 and GRIA2 cell surface expression. This is Proline-rich transmembrane protein 1 from Homo sapiens (Human).